The chain runs to 780 residues: ATP-dependent 6-phosphofructokinase, liver type (780 aa).

Residue Ala2 is modified to N-acetylalanine. The segment at 2–390 (AAVDLEKLRA…NWNIYKLLAH (389 aa)) is N-terminal catalytic PFK domain 1. Residues Gly25, 88-89 (RC), and 118-121 (GDGS) contribute to the ATP site. Asp119 is a Mg(2+) binding site. Substrate contacts are provided by residues 164-166 (SID), Arg201, 208-210 (MGR), Glu264, Arg292, and 298-301 (HVQR). Asp166 serves as the catalytic Proton acceptor. Ser377 bears the Phosphoserine mark. An interdomain linker region spans residues 391-400 (QKPPKEKSNF). The C-terminal regulatory PFK domain 2 stretch occupies residues 401-780 (SLAILNVGAP…RRTLSMDKGF (380 aa)). Beta-D-fructose 2,6-bisphosphate-binding positions include Arg470, 527–531 (TISNN), Arg565, 572–574 (MGG), and Glu628. Ser529 carries O-linked (GlcNAc) serine glycosylation. At Tyr640 the chain carries Phosphotyrosine. Residues Arg654, 660 to 663 (HLQQ), and Arg734 each bind beta-D-fructose 2,6-bisphosphate. Ser775 bears the Phosphoserine mark.

It belongs to the phosphofructokinase type A (PFKA) family. ATP-dependent PFK group I subfamily. Eukaryotic two domain clade 'E' sub-subfamily. As to quaternary structure, homo- and heterotetramers. Phosphofructokinase (PFK) enzyme functions as a tetramer composed of different combinations of 3 types of subunits, called PFKM (M), PFKL (L) and PFKP (P). The composition of the PFK tetramer differs according to the tissue type it is present in. The kinetic and regulatory properties of the tetrameric enzyme are dependent on the subunit composition, hence can vary across tissues. Requires Mg(2+) as cofactor. GlcNAcylation at Ser-529 by OGT decreases enzyme activity, leading to redirect glucose flux through the oxidative pentose phosphate pathway. Glycosylation is stimulated by both hypoxia and glucose deprivation.

It is found in the cytoplasm. It carries out the reaction beta-D-fructose 6-phosphate + ATP = beta-D-fructose 1,6-bisphosphate + ADP + H(+). It functions in the pathway carbohydrate degradation; glycolysis; D-glyceraldehyde 3-phosphate and glycerone phosphate from D-glucose: step 3/4. Allosterically activated by ADP, AMP, or fructose 2,6-bisphosphate, and allosterically inhibited by ATP or citrate. GlcNAcylation by OGT overcomes allosteric regulation. Functionally, catalyzes the phosphorylation of D-fructose 6-phosphate to fructose 1,6-bisphosphate by ATP, the first committing step of glycolysis. Negatively regulates the phagocyte oxidative burst in response to bacterial infection by controlling cellular NADPH biosynthesis and NADPH oxidase-derived reactive oxygen species. Upon macrophage activation, drives the metabolic switch toward glycolysis, thus preventing glucose turnover that produces NADPH via pentose phosphate pathway. This is ATP-dependent 6-phosphofructokinase, liver type (PFKL) from Pongo abelii (Sumatran orangutan).